The primary structure comprises 772 residues: Endoplasmic reticulum membrane sensor NFE2L1 (772 aa).

Residues 7–24 form a helical; Signal-anchor for type II membrane protein membrane-spanning segment; sequence YFTEGLIQFTILLSLIGV. The cholesterol recognition/amino acid consensus (CRAC) region stretch occupies residues 191–199; that stretch reads IFDYSHRQK. A compositionally biased stretch (basic and acidic residues) spans 198–216; it reads QKESEVDKELSDGRERGDG. The disordered stretch occupies residues 198–223; it reads QKESEVDKELSDGRERGDGWRSAGGQ. Residues N332, N340, N362, N402, N407, N414, N425, and N429 are each glycosylated (N-linked (GlcNAc...) asparagine). The tract at residues 472-531 is disordered; sequence EEEFDSDSGLSLDSGHSPASLSSSEASSSSSSSSSSSSSSSSSSSSFSEEGAVGYSSDSE. The span at 478–519 shows a compositional bias: low complexity; sequence DSGLSLDSGHSPASLSSSEASSSSSSSSSSSSSSSSSSSSFS. N-linked (GlcNAc...) asparagine glycosylation occurs at N574. The disordered stretch occupies residues 581 to 613; the sequence is PGTLDPEEPKLPSVGKKSSKEKPSEFLDKQMSR. A compositionally biased stretch (basic and acidic residues) spans 598–613; sequence SSKEKPSEFLDKQMSR. The 64-residue stretch at 654–717 folds into the bZIP domain; the sequence is LIRDIRRRGK…RQMKQKVQNL (64 aa). Residues 656-675 form a basic motif region; the sequence is RDIRRRGKNKMAAQNCRKRK. The segment at 682 to 696 is leucine-zipper; the sequence is LERDVEDLQRDKSKL. Positions 761 to 768 match the Nuclear localization signal motif; sequence RRQERKQK.

This sequence belongs to the bZIP family. CNC subfamily. Interacts (via the bZIP domain) with small MAF protein (MAFF, MAFG or MAFK); required for binding to antioxidant response elements (AREs) on DNA. Cleaved at Leu-104 following retrotranslocation, releasing the protein from the endoplasmic reticulum membrane and forming the transcription factor NRF1 that translocates into the nucleus.

Its subcellular location is the endoplasmic reticulum membrane. It localises to the nucleus. Functionally, endoplasmic reticulum membrane sensor that translocates into the nucleus in response to various stresses to act as a transcription factor. Constitutes a precursor of the transcription factor NRF1. Able to detect various cellular stresses, such as cholesterol excess, oxidative stress or proteasome inhibition. In response to stress, it is released from the endoplasmic reticulum membrane following cleavage and translocates into the nucleus to form the transcription factor NRF1. Acts as a key sensor of cholesterol excess: in excess cholesterol conditions, the endoplasmic reticulum membrane form of the protein directly binds cholesterol via its CRAC motif, preventing cleavage and release of the transcription factor NRF1, thereby allowing expression of genes promoting cholesterol removal. Involved in proteasome homeostasis: in response to proteasome inhibition, it is released from the endoplasmic reticulum membrane, translocates to the nucleus and activates expression of genes encoding proteasome subunits. CNC-type bZIP family transcription factor that translocates to the nucleus and regulates expression of target genes in response to various stresses. Heterodimerizes with small-Maf proteins (MAFF, MAFG or MAFK) and binds DNA motifs including the antioxidant response elements (AREs), which regulate expression of genes involved in oxidative stress response. Activates or represses expression of target genes, depending on the context. Plays a key role in cholesterol homeostasis by acting as a sensor of cholesterol excess: in low cholesterol conditions, translocates into the nucleus and represses expression of genes involved in defense against cholesterol excess. In excess cholesterol conditions, the endoplasmic reticulum membrane form of the protein directly binds cholesterol via its CRAC motif, preventing cleavage and release of the transcription factor NRF1, thereby allowing expression of genes promoting cholesterol removal. Critical for redox balance in response to oxidative stress: acts by binding the AREs motifs on promoters and mediating activation of oxidative stress response genes. Involved in proteasome homeostasis: in response to proteasome inhibition, mediates the 'bounce-back' of proteasome subunits by translocating into the nucleus and activating expression of genes encoding proteasome subunits. This chain is Endoplasmic reticulum membrane sensor NFE2L1, found in Gallus gallus (Chicken).